The following is a 69-amino-acid chain: Cell division protein CrgA (69 aa).

The next 2 helical transmembrane spans lie at 14–34 and 45–65; these read VWFP…MVLF and AVGT…FAMM.

Belongs to the CrgA family.

The protein resides in the cell membrane. Involved in cell division. This is Cell division protein CrgA from Tropheryma whipplei (strain TW08/27) (Whipple's bacillus).